Consider the following 59-residue polypeptide: Large ribosomal subunit protein uL30 (59 aa).

This sequence belongs to the universal ribosomal protein uL30 family. As to quaternary structure, part of the 50S ribosomal subunit.

The protein is Large ribosomal subunit protein uL30 of Geotalea uraniireducens (strain Rf4) (Geobacter uraniireducens).